The primary structure comprises 446 residues: Packaging protein 1 (446 aa).

Residues M1 to H71 are disordered. Residues F31–E43 are compositionally biased toward basic and acidic residues. G170–S177 contributes to the ATP binding site. Residues R439–K446 are DNA-binding.

This sequence belongs to the adenoviridae packaging protein 1 family. In terms of assembly, homodimer. Part of a genome packaging complex composed of packaging proteins 1, 2 and 3; this complex specifically binds to the packaging sequence on the left end of viral genomic DNA and performs packaging of the viral genome. Interacts with protein 33K.

The protein resides in the virion. It localises to the host nucleus. Its subcellular location is the host nucleoplasm. The protein localises to the host nucleolus. Component of the packaging machinery which encapsidates the viral DNA into preformed capsids and transcriptional activator of the viral major late promoter (MLP). Binds, along with packaging proteins 2 and 3, to the specific packaging sequence on the left end of viral genomic DNA and displays ATPase activity thereby providing the power stroke of the packaging machinery. The activity of packaging protein IVa2 is stimulated by protein 33K which acts as a terminase. May be the protein that pumps DNA into the capsid powered by ATP hydrolysis. Specifically binds to the 5'-CG-3' nucleotides of the repeats making up the packaging sequence. Component of the DEF-A and DEF-B transcription factors that bind downstream elements of the major late promoter (MLP), and stimulate transcription from the MLP after initiation of viral DNA replication. DEF-A is a heterodimer packaging proteins 1 and 2 and DEF-B is a homodimer of packaging protein 1. This Canine adenovirus serotype 2 (strain Toronto A 26-61) (CAdV-2) protein is Packaging protein 1.